Here is a 379-residue protein sequence, read N- to C-terminus: Fructose-1,6-bisphosphate aldolase/phosphatase (379 aa).

Catalysis depends on Asp-13, which acts as the Proton acceptor; for FBP phosphatase activity. The Mg(2+) site is built by Asp-13, His-20, Asp-51, and Asp-52. Residue His-20 coordinates beta-D-fructose 1,6-bisphosphate. His-20 is a binding site for dihydroxyacetone phosphate. Beta-D-fructose 1,6-bisphosphate is bound at residue Tyr-89. Gln-93 is a binding site for Mg(2+). 102 to 103 (GN) provides a ligand contact to beta-D-fructose 1,6-bisphosphate. Asp-130 is a binding site for Mg(2+). Residue Lys-131 participates in beta-D-fructose 1,6-bisphosphate binding. Lys-131 contributes to the dihydroxyacetone phosphate binding site. Tyr-227 functions as the Proton donor/acceptor; for FBP aldolase activity in the catalytic mechanism. Lys-230, Asp-231, and Asp-232 together coordinate Mg(2+). The active-site Schiff-base intermediate with DHAP; for FBP aldolase activity is Lys-230. Beta-D-fructose 1,6-bisphosphate contacts are provided by residues 240–241 (QS), Arg-264, Asp-285, and Tyr-346. Dihydroxyacetone phosphate is bound by residues Arg-264 and Asp-285.

This sequence belongs to the FBP aldolase/phosphatase family. In terms of assembly, homooctamer; dimer of tetramers. Mg(2+) serves as cofactor.

The catalysed reaction is beta-D-fructose 1,6-bisphosphate + H2O = beta-D-fructose 6-phosphate + phosphate. It catalyses the reaction beta-D-fructose 1,6-bisphosphate = D-glyceraldehyde 3-phosphate + dihydroxyacetone phosphate. Its pathway is carbohydrate biosynthesis; gluconeogenesis. Functionally, catalyzes two subsequent steps in gluconeogenesis: the aldol condensation of dihydroxyacetone phosphate (DHAP) and glyceraldehyde-3-phosphate (GA3P) to fructose-1,6-bisphosphate (FBP), and the dephosphorylation of FBP to fructose-6-phosphate (F6P). In Moorella thermoacetica (strain ATCC 39073 / JCM 9320), this protein is Fructose-1,6-bisphosphate aldolase/phosphatase.